A 187-amino-acid chain; its full sequence is Superoxide dismutase [Cu-Zn] (187 aa).

The signal sequence occupies residues 1-21; that stretch reads MSLLPTGTLILLVLFILVLIT. Residues His-76, His-78, and His-93 each contribute to the Cu cation site. Cys-87 and Cys-176 are oxidised to a cystine. Zn(2+)-binding residues include His-93, His-101, His-110, and Asp-113. His-150 is a binding site for Cu cation.

Belongs to the Cu-Zn superoxide dismutase family. Requires Cu cation as cofactor. Zn(2+) serves as cofactor.

It carries out the reaction 2 superoxide + 2 H(+) = H2O2 + O2. Functionally, destroys radicals which are normally produced within the cells and which are toxic to biological systems. This chain is Superoxide dismutase [Cu-Zn], found in Chlorella (PBCV-1).